Here is a 659-residue protein sequence, read N- to C-terminus: Protein phosphatase Slingshot homolog 3 (659 aa).

The segment covering 1–16 has biased composition (polar residues); that stretch reads MALVTVSRSPPGSGAS. Residues 1-31 form a disordered region; sequence MALVTVSRSPPGSGASTPVGPWDQAVQRRSR. At Ala-2 the chain carries N-acetylalanine. Phosphoserine occurs at positions 9 and 37. The segment at 46–96 is disordered; the sequence is LGLQDGGDNDDAAEASSEPTEKAPSEEELHGDQTDFGQGSQSPQKQEEQRQ. Residues 64–78 are compositionally biased toward basic and acidic residues; sequence PTEKAPSEEELHGDQ. The span at 80–89 shows a compositional bias: polar residues; it reads DFGQGSQSPQ. A phosphoserine mark is found at Ser-85 and Ser-87. The DEK-C domain maps to 269–324; that stretch reads EQMEQAIRAELWKVLDVSDLESVTSKEIRQALELRLGLPLQQYRDFIDNQMLLLVA. Residues 328 to 469 enclose the Tyrosine-protein phosphatase domain; that stretch reads RASRIFPHLY…LQIYQGILTA (142 aa). Catalysis depends on Cys-413, which acts as the Phosphocysteine intermediate. Disordered stretches follow at residues 482 to 534, 547 to 603, and 617 to 638; these read GVSP…RINL, SLEL…RQSV, and QAFQ…ISST. A compositionally biased stretch (low complexity) spans 547 to 557; it reads SLELESTSETS.

Belongs to the protein-tyrosine phosphatase family. As to quaternary structure, does not bind to, or colocalize with, filamentous actin.

The protein localises to the cytoplasm. It is found in the cytoskeleton. Its subcellular location is the nucleus. It carries out the reaction O-phospho-L-tyrosyl-[protein] + H2O = L-tyrosyl-[protein] + phosphate. The enzyme catalyses O-phospho-L-seryl-[protein] + H2O = L-seryl-[protein] + phosphate. It catalyses the reaction O-phospho-L-threonyl-[protein] + H2O = L-threonyl-[protein] + phosphate. Protein phosphatase which may play a role in the regulation of actin filament dynamics. Can dephosphorylate and activate the actin binding/depolymerizing factor cofilin, which subsequently binds to actin filaments and stimulates their disassembly. This Homo sapiens (Human) protein is Protein phosphatase Slingshot homolog 3 (SSH3).